A 156-amino-acid polypeptide reads, in one-letter code: Ribosomal RNA large subunit methyltransferase H (156 aa).

Residues L73, G104, and 123 to 128 (ISSMTL) each bind S-adenosyl-L-methionine.

It belongs to the RNA methyltransferase RlmH family. In terms of assembly, homodimer.

It localises to the cytoplasm. The enzyme catalyses pseudouridine(1915) in 23S rRNA + S-adenosyl-L-methionine = N(3)-methylpseudouridine(1915) in 23S rRNA + S-adenosyl-L-homocysteine + H(+). Functionally, specifically methylates the pseudouridine at position 1915 (m3Psi1915) in 23S rRNA. This chain is Ribosomal RNA large subunit methyltransferase H, found in Janthinobacterium sp. (strain Marseille) (Minibacterium massiliensis).